We begin with the raw amino-acid sequence, 805 residues long: Leucine--tRNA ligase (805 aa).

Positions 40-51 (PYPSGAGLHVGH) match the 'HIGH' region motif. The short motif at 576–580 (KMSKS) is the 'KMSKS' region element. Lys-579 is an ATP binding site.

The protein belongs to the class-I aminoacyl-tRNA synthetase family.

It is found in the cytoplasm. The catalysed reaction is tRNA(Leu) + L-leucine + ATP = L-leucyl-tRNA(Leu) + AMP + diphosphate. The polypeptide is Leucine--tRNA ligase (Anoxybacillus flavithermus (strain DSM 21510 / WK1)).